We begin with the raw amino-acid sequence, 1281 residues long: MAQSKRHVYSRTPSGSRMSAEASARPLRVGSRVEVIGKGHRGTVAYVGATLFATGKWVGVILDEAKGKNDGTVQGRKYFTCDEGHGIFVRQSQIQVFEDGADTTSPETPDSSASKVLRREGTDSNAKTSKLRGPKPKKAPTARKTTTRRPKPTRPASTGVAGASSSLGPSGSASAGELSSSEPSTPAQTPLAAPIIPTPALTSPGAAPPLPSPSKEEEGLRAQVRDLEEKLETLRLKRAEDKAKLKELEKHKIQLEQVQEWKSKMQEQQADLQRRLKEARKEAKEALEAKERYMEEMADTADAIEMATLDKEMAEERAESLQQEVEALKERVDELTTDLEILKAEIEEKGSDGAASSYQLKQLEEQNARLKDALVRMRDLSSSEKQEHVKLQKLMEKKNQELEVVRQQRERLQEELSQAESTIDELKEQVDAALGAEEMVEMLTDRNLNLEEKVRELRETVGDLEAMNEMNDELQENARETELELREQLDMAGARVREAQKRVEAAQETVADYQQTIKKYRQLTAHLQDVNRELTNQQEASVERQQQPPPETFDFKIKFAETKAHAKAIEMELRQMEVAQANRHMSLLTAFMPDSFLRPGGDHDCVLVLLLMPRLICKAELIRKQAQEKFDLSENCSERPGLRGAAGEQLSFAAGLVYSLSLLQATLHRYEHALSQCSVDVYKKVGSLYPEMSAHERSLDFLIELLHKDQLDETVNVEPLTKAIKYYQHLYSIHLAEQPEDSTMQLADHIKFTQSALDCMSVEVGRLRAFLQGGQEASDIALLLRDLETSCSDIRQFCKKIRRRMPGTDAPGIPAALAFGAQVSDTLLDCRKHLTWVVAVLQEVAAAAAQLIAPLAENEGLPVAALEELAFKASEQIYGTPSSSPYECLRQSCNILISTMNKLATAMQEGEYDAERPPSKPPPVELRAAALRAEITDAEGLGLKLEDRETVIKELKKSLKIKGEELSEANVRLSLLEKKLDSAAKDADERIEKVQTRLEETQALLRKKEKEFEETMDALQADIDQLEAEKAELKQRLNSQSKRTIEGIRGPPPSGIATLVSGIAGEEQQRGGAPGQAPGIVPGPGLVKDSPLLLQQISAMRLHISQLQHENSVLKGAQMKASLAALPPLHVAKLSLPPHEGPGSELAAGALYRKTNQLLETLNQLSTHTHVVDITRSSPAAKSPSAQLLEQVTQLKSLSDTIEKLKDEVLKETVSQRPGATVPTDFATFPSSAFLRAKEEQQDDTVYMGKVTFSCAAGLGQRHRLVLTQEQLHQLHDRLIS.

Residues 1-25 (MAQSKRHVYSRTPSGSRMSAEASAR) are disordered. The CAP-Gly domain maps to 48 to 90 (GATLFATGKWVGVILDEAKGKNDGTVQGRKYFTCDEGHGIFVR). Residues 99–225 (DGADTTSPET…EEEGLRAQVR (127 aa)) form a disordered region. Residues 102–114 (DTTSPETPDSSAS) are compositionally biased toward polar residues. Threonine 108, threonine 145, threonine 146, and threonine 147 each carry phosphothreonine. A compositionally biased stretch (basic residues) spans 129–152 (SKLRGPKPKKAPTARKTTTRRPKP). A compositionally biased stretch (low complexity) spans 161 to 205 (AGASSSLGPSGSASAGELSSSEPSTPAQTPLAAPIIPTPALTSPG). Residues serine 179 and serine 212 each carry the phosphoserine modification. Over residues 214–225 (SKEEEGLRAQVR) the composition is skewed to basic and acidic residues. Coiled-coil stretches lie at residues 217 to 540 (EEGL…QQEA) and 952 to 1043 (IKEL…QSKR). Residues 911–1281 (EYDAERPPSK…LHQLHDRLIS (371 aa)) are interaction with HPS6. Residues 1065 to 1084 (GEEQQRGGAPGQAPGIVPGP) are disordered.

Belongs to the dynactin 150 kDa subunit family. Monomer and homodimer. Subunit of dynactin, a multiprotein complex part of a tripartite complex with dynein and a adapter, such as BICDL1, BICD2 or HOOK3. The dynactin complex is built around ACTR1A/ACTB filament and consists of an actin-related filament composed of a shoulder domain, a pointed end and a barbed end. Its length is defined by its flexible shoulder domain. The soulder is composed of 2 DCTN1 subunits, 4 DCTN2 and 2 DCTN3. DCTN1/p150(glued) binds directly to microtubules and to cytoplasmic dynein. The 4 DCNT2 (via N-terminus) bind the ACTR1A filament and act as molecular rulers to determine the length. The pointed end is important for binding dynein-dynactin cargo adapters. Consists of 4 subunits: ACTR10, DCNT4, DCTN5 and DCTN6. The barbed end is composed of a CAPZA1:CAPZB heterodimers, which binds ACTR1A/ACTB filament and dynactin and stabilizes dynactin. Interacts with the C-terminus of MAPRE1, MAPRE2 and MAPRE3. Interacts (via C-terminus) with SNX6. Interacts with CLN3, DYNAP, ECPAS and FBXL5. Interacts with MISP; this interaction regulates its distribution at the cell cortex. Interacts with CEP131. Interacts with CEP126. Interacts with CLIP1. Interacts with dynein intermediate chain and dynein heavy chain. Interacts with PLK1 (via POLO-box domain). Interacts with TBCB. Binds preferentially to tyrosinated microtubules than to detyrosinated microtubules. Interacts with PARD6A. Interacts with HPS6. Interacts with KIF3A. Interacts with BICD2. Interacts with DST (isoform 9). Interacts with DST (isoform 1). Identified in a complex with MREG and RILP. Interacts with BCCIP (isoform 2/alpha). Interacts with DCDC1. Interacts with AKNA. Interacts with DYNC1I2. Interacts with RUFY3 and RUFY4. Ubiquitinated by a SCF complex containing FBXL5, leading to its degradation by the proteasome. Post-translationally, phosphorylation by SLK at Thr-145, Thr-146 and Thr-147 targets DCTN1 to the centrosome. It is uncertain if SLK phosphorylates all three threonines or one or two of them. PLK1-mediated phosphorylation at Ser-179 is essential for its localization in the nuclear envelope, promotes its dissociation from microtubules during early mitosis and positively regulates nuclear envelope breakdown during prophase.

It localises to the cytoplasm. Its subcellular location is the cytoskeleton. The protein localises to the microtubule organizing center. It is found in the centrosome. The protein resides in the centriole. It localises to the spindle. Its subcellular location is the nucleus envelope. The protein localises to the cell cortex. Its function is as follows. Part of the dynactin complex that activates the molecular motor dynein for ultra-processive transport along microtubules. Plays a key role in dynein-mediated retrograde transport of vesicles and organelles along microtubules by recruiting and tethering dynein to microtubules. Binds to both dynein and microtubules providing a link between specific cargos, microtubules and dynein. Essential for targeting dynein to microtubule plus ends, recruiting dynein to membranous cargos and enhancing dynein processivity (the ability to move along a microtubule for a long distance without falling off the track). Can also act as a brake to slow the dynein motor during motility along the microtubule. Can regulate microtubule stability by promoting microtubule formation, nucleation and polymerization and by inhibiting microtubule catastrophe in neurons. Inhibits microtubule catastrophe by binding both to microtubules and to tubulin, leading to enhanced microtubule stability along the axon. Plays a role in metaphase spindle orientation. Plays a role in centriole cohesion and subdistal appendage organization and function. Its recruitment to the centriole in a KIF3A-dependent manner is essential for the maintenance of centriole cohesion and the formation of subdistal appendage. Also required for microtubule anchoring at the mother centriole. Plays a role in primary cilia formation. The protein is Dynactin subunit 1 (DCTN1) of Sus scrofa (Pig).